The following is a 196-amino-acid chain: MTQIILASTSAYRRMLLEKLRLPFICAAPNTDETPRMNENAEQLVMRLAQAKAQALQTKYSQHLIIGSDQVCVINGEITGKPHSFEHAFKQLRQASGHCVTFYTGISLFNSKTGITDTRCELFNVYFRELADDEIRAYLTAENPLNCAGSFKSEGLGITLFERLEGKDPNTLIGLPLITLTELLIRQGVNPLTAIG.

Asp-69 functions as the Proton acceptor in the catalytic mechanism.

Belongs to the Maf family. YceF subfamily. It depends on a divalent metal cation as a cofactor.

Its subcellular location is the cytoplasm. The catalysed reaction is N(7)-methyl-GTP + H2O = N(7)-methyl-GMP + diphosphate + H(+). Its function is as follows. Nucleoside triphosphate pyrophosphatase that hydrolyzes 7-methyl-GTP (m(7)GTP). May have a dual role in cell division arrest and in preventing the incorporation of modified nucleotides into cellular nucleic acids. This is 7-methyl-GTP pyrophosphatase from Photorhabdus laumondii subsp. laumondii (strain DSM 15139 / CIP 105565 / TT01) (Photorhabdus luminescens subsp. laumondii).